The primary structure comprises 142 residues: Large ribosomal subunit protein uL11 (142 aa).

Belongs to the universal ribosomal protein uL11 family. Part of the ribosomal stalk of the 50S ribosomal subunit. Interacts with L10 and the large rRNA to form the base of the stalk. L10 forms an elongated spine to which L12 dimers bind in a sequential fashion forming a multimeric L10(L12)X complex. One or more lysine residues are methylated.

In terms of biological role, forms part of the ribosomal stalk which helps the ribosome interact with GTP-bound translation factors. This chain is Large ribosomal subunit protein uL11, found in Rhodopseudomonas palustris (strain BisB5).